The following is a 122-amino-acid chain: Ribosome-binding factor A (122 aa).

Belongs to the RbfA family. Monomer. Binds 30S ribosomal subunits, but not 50S ribosomal subunits or 70S ribosomes.

It localises to the cytoplasm. Functionally, one of several proteins that assist in the late maturation steps of the functional core of the 30S ribosomal subunit. Associates with free 30S ribosomal subunits (but not with 30S subunits that are part of 70S ribosomes or polysomes). Required for efficient processing of 16S rRNA. May interact with the 5'-terminal helix region of 16S rRNA. In Cupriavidus necator (strain ATCC 17699 / DSM 428 / KCTC 22496 / NCIMB 10442 / H16 / Stanier 337) (Ralstonia eutropha), this protein is Ribosome-binding factor A.